Here is a 91-residue protein sequence, read N- to C-terminus: Small ribosomal subunit protein uS15 (91 aa).

This sequence belongs to the universal ribosomal protein uS15 family. As to quaternary structure, part of the 30S ribosomal subunit. Forms a bridge to the 50S subunit in the 70S ribosome, contacting the 23S rRNA.

One of the primary rRNA binding proteins, it binds directly to 16S rRNA where it helps nucleate assembly of the platform of the 30S subunit by binding and bridging several RNA helices of the 16S rRNA. Its function is as follows. Forms an intersubunit bridge (bridge B4) with the 23S rRNA of the 50S subunit in the ribosome. The sequence is that of Small ribosomal subunit protein uS15 from Rickettsia africae (strain ESF-5).